Consider the following 287-residue polypeptide: Oxaloacetate decarboxylase (287 aa).

Residue S50 participates in substrate binding. D88 contacts Mg(2+). 2 residues coordinate substrate: R159 and H235.

The protein belongs to the isocitrate lyase/PEP mutase superfamily. Oxaloacetate decarboxylase family. Homotetramer; dimer of dimers. Mg(2+) serves as cofactor.

It carries out the reaction oxaloacetate + H(+) = pyruvate + CO2. Functionally, catalyzes the decarboxylation of oxaloacetate into pyruvate. Seems to play a role in maintaining cellular concentrations of bicarbonate and pyruvate. The protein is Oxaloacetate decarboxylase of Pseudomonas paraeruginosa (strain DSM 24068 / PA7) (Pseudomonas aeruginosa (strain PA7)).